The primary structure comprises 473 residues: GTPase Der (473 aa).

EngA-type G domains are found at residues 3–167 (LTIA…GKDK) and 204–379 (IRIA…RIWN). Residues 9 to 16 (GRPNVGKS), 56 to 60 (DTAGL), 119 to 122 (NKSE), 210 to 217 (GRPNTGKS), 257 to 261 (DTAGL), and 322 to 325 (NKWD) each bind GTP. The region spanning 380–464 (RRISTGKLNR…PIRLSLRTSD (85 aa)) is the KH-like domain.

It belongs to the TRAFAC class TrmE-Era-EngA-EngB-Septin-like GTPase superfamily. EngA (Der) GTPase family. As to quaternary structure, associates with the 50S ribosomal subunit.

In terms of biological role, GTPase that plays an essential role in the late steps of ribosome biogenesis. The sequence is that of GTPase Der from Bartonella bacilliformis (strain ATCC 35685 / KC583 / Herrer 020/F12,63).